The following is a 227-amino-acid chain: MIDAFFIAGTDTDVGKTVASKAILQALGAKGLNTIGYKPVAAGSDKTAEGWRNSDALHLQKAATLDIAYDDVNPYALELPTSPHIAAKHEHVEIKYEVLSEKLAHHKEQSDIVLVEGAGGWRVPVSDTDSLSTWVQQEQLPVVLVVGIKLGCLSHALLTAEIIKADGLNLVGWVANRVNPGTEHYAEIIDMLEDRLDAPKLGEIPYIPSAKRKDLGKFINVEPLLNA.

13–18 (DVGKTV) contributes to the ATP binding site. Thr-17 lines the Mg(2+) pocket. Residue Lys-38 is part of the active site. Residues Asp-55, 116–119 (EGAG), 176–177 (NR), and 205–207 (PYI) each bind ATP. 2 residues coordinate Mg(2+): Asp-55 and Glu-116.

The protein belongs to the dethiobiotin synthetase family. As to quaternary structure, homodimer. It depends on Mg(2+) as a cofactor.

It localises to the cytoplasm. It catalyses the reaction (7R,8S)-7,8-diammoniononanoate + CO2 + ATP = (4R,5S)-dethiobiotin + ADP + phosphate + 3 H(+). It participates in cofactor biosynthesis; biotin biosynthesis; biotin from 7,8-diaminononanoate: step 1/2. Functionally, catalyzes a mechanistically unusual reaction, the ATP-dependent insertion of CO2 between the N7 and N8 nitrogen atoms of 7,8-diaminopelargonic acid (DAPA, also called 7,8-diammoniononanoate) to form a ureido ring. In Vibrio campbellii (strain ATCC BAA-1116), this protein is ATP-dependent dethiobiotin synthetase BioD.